The following is a 392-amino-acid chain: ATP phosphoribosyltransferase regulatory subunit (392 aa).

Belongs to the class-II aminoacyl-tRNA synthetase family. HisZ subfamily. In terms of assembly, heteromultimer composed of HisG and HisZ subunits.

Its subcellular location is the cytoplasm. It functions in the pathway amino-acid biosynthesis; L-histidine biosynthesis; L-histidine from 5-phospho-alpha-D-ribose 1-diphosphate: step 1/9. Functionally, required for the first step of histidine biosynthesis. May allow the feedback regulation of ATP phosphoribosyltransferase activity by histidine. The polypeptide is ATP phosphoribosyltransferase regulatory subunit (Listeria monocytogenes serotype 4b (strain F2365)).